A 137-amino-acid chain; its full sequence is Small ribosomal subunit protein uS12 (137 aa).

The tract at residues 1-23 is disordered; the sequence is MPTINQLVRKGRKSKSSKSDAPA. The residue at position 102 (Asp102) is a 3-methylthioaspartic acid.

Belongs to the universal ribosomal protein uS12 family. Part of the 30S ribosomal subunit. Contacts proteins S8 and S17. May interact with IF1 in the 30S initiation complex.

With S4 and S5 plays an important role in translational accuracy. In terms of biological role, interacts with and stabilizes bases of the 16S rRNA that are involved in tRNA selection in the A site and with the mRNA backbone. Located at the interface of the 30S and 50S subunits, it traverses the body of the 30S subunit contacting proteins on the other side and probably holding the rRNA structure together. The combined cluster of proteins S8, S12 and S17 appears to hold together the shoulder and platform of the 30S subunit. The chain is Small ribosomal subunit protein uS12 from Levilactobacillus brevis (strain ATCC 367 / BCRC 12310 / CIP 105137 / JCM 1170 / LMG 11437 / NCIMB 947 / NCTC 947) (Lactobacillus brevis).